A 37-amino-acid polypeptide reads, in one-letter code: Cytochrome b6-f complex subunit 5 (37 aa).

Residues 5-25 (LPSGIVLGLIPITLAGLFVTA) traverse the membrane as a helical segment.

It belongs to the PetG family. As to quaternary structure, the 4 large subunits of the cytochrome b6-f complex are cytochrome b6, subunit IV (17 kDa polypeptide, PetD), cytochrome f and the Rieske protein, while the 4 small subunits are PetG, PetL, PetM and PetN. The complex functions as a dimer.

Its subcellular location is the plastid. The protein localises to the chloroplast thylakoid membrane. In terms of biological role, component of the cytochrome b6-f complex, which mediates electron transfer between photosystem II (PSII) and photosystem I (PSI), cyclic electron flow around PSI, and state transitions. PetG is required for either the stability or assembly of the cytochrome b6-f complex. The protein is Cytochrome b6-f complex subunit 5 of Pinus thunbergii (Japanese black pine).